The following is a 370-amino-acid chain: Aminomethyltransferase (370 aa).

It belongs to the GcvT family. The glycine cleavage system is composed of four proteins: P, T, L and H.

It carries out the reaction N(6)-[(R)-S(8)-aminomethyldihydrolipoyl]-L-lysyl-[protein] + (6S)-5,6,7,8-tetrahydrofolate = N(6)-[(R)-dihydrolipoyl]-L-lysyl-[protein] + (6R)-5,10-methylene-5,6,7,8-tetrahydrofolate + NH4(+). The glycine cleavage system catalyzes the degradation of glycine. The polypeptide is Aminomethyltransferase (Prochlorococcus marinus (strain MIT 9301)).